The chain runs to 494 residues: Maintenance of mitochondrial morphology protein 1 (494 aa).

Over 1 to 25 (MGDDQSLRSTVAENDISANLSFTQG) the chain is Lumenal. A helical membrane pass occupies residues 26–46 (FLLGQLSVVLLIGAFIKFFIF). The Cytoplasmic segment spans residues 47–494 (GEAPPPPSRG…GTLPGGAAAN (448 aa)). Disordered stretches follow at residues 53–99 (PSRG…VPSS), 278–330 (PPLH…KSNV), and 395–494 (RTGV…AAAN). Positions 57–67 (LSHRASTHRRS) are enriched in basic residues. 2 stretches are compositionally biased toward polar residues: residues 68–81 (NSIY…GTSR) and 88–99 (STSNVLRPVPSS). The 254-residue stretch at 134–387 (QPESLDWFNV…EPRVQVVGLP (254 aa)) folds into the SMP-LTD domain. The span at 278 to 290 (PPLHTPSPSPSPP) shows a compositional bias: pro residues. Composition is skewed to polar residues over residues 300 to 318 (THPT…NAQE) and 406 to 415 (TGSNAASRSA). Basic and acidic residues predominate over residues 425 to 437 (RADDIGREPDGLR).

This sequence belongs to the MMM1 family. Homodimer. Component of the ER-mitochondria encounter structure (ERMES) or MDM complex, composed of mmm1, mdm10, mdm12 and mdm34. A mmm1 homodimer associates with one molecule of mdm12 on each side in a pairwise head-to-tail manner, and the SMP-LTD domains of mmm1 and mdm12 generate a continuous hydrophobic tunnel for phospholipid trafficking.

The protein localises to the endoplasmic reticulum membrane. In terms of biological role, component of the ERMES/MDM complex, which serves as a molecular tether to connect the endoplasmic reticulum (ER) and mitochondria. Components of this complex are involved in the control of mitochondrial shape and protein biogenesis, and function in nonvesicular lipid trafficking between the ER and mitochondria. The mdm12-mmm1 subcomplex functions in the major beta-barrel assembly pathway that is responsible for biogenesis of all outer membrane beta-barrel proteins, and acts in a late step after the SAM complex. The mdm10-mdm12-mmm1 subcomplex further acts in the TOM40-specific pathway after the action of the mdm12-mmm1 complex. Essential for establishing and maintaining the structure of mitochondria and maintenance of mtDNA nucleoids. This is Maintenance of mitochondrial morphology protein 1 from Aspergillus oryzae (strain ATCC 42149 / RIB 40) (Yellow koji mold).